The primary structure comprises 247 residues: Geranylgeranylglyceryl phosphate synthase (247 aa).

Mg(2+) contacts are provided by D23 and S52. Residues 171-177, 203-204, and 225-226 each bind sn-glycerol 1-phosphate; these read YLEAGSG, GG, and GT.

This sequence belongs to the GGGP/HepGP synthase family. Group II subfamily. The cofactor is Mg(2+).

It is found in the cytoplasm. The enzyme catalyses sn-glycerol 1-phosphate + (2E,6E,10E)-geranylgeranyl diphosphate = sn-3-O-(geranylgeranyl)glycerol 1-phosphate + diphosphate. The protein operates within membrane lipid metabolism; glycerophospholipid metabolism. In terms of biological role, prenyltransferase that catalyzes the transfer of the geranylgeranyl moiety of geranylgeranyl diphosphate (GGPP) to the C3 hydroxyl of sn-glycerol-1-phosphate (G1P). This reaction is the first ether-bond-formation step in the biosynthesis of archaeal membrane lipids. The protein is Geranylgeranylglyceryl phosphate synthase of Methanococcoides burtonii (strain DSM 6242 / NBRC 107633 / OCM 468 / ACE-M).